A 410-amino-acid polypeptide reads, in one-letter code: Lipid droplet-regulating VLDL assembly factor AUP1 (410 aa).

N-acetylmethionine is present on M1. Topologically, residues 1-20 (MELPSGPGPERLFDSHRLPG) are cytoplasmic. S5 is subject to Phosphoserine. Residues 21-41 (DCFLLLVLLLYAPVGFCLLVL) lie within the membrane without spanning it. The Cytoplasmic portion of the chain corresponds to 42–410 (RLFLGIHVFL…FTERRAQEAD (369 aa)). Residues 255–295 (TGTRLTPADKAEHMKRQRHPRLRPQSAQSSFPPSPGPSPDV) form a disordered region. A phosphoserine mark is found at S288 and S292. Residues 296 to 338 (QLATLAQRVKEVLPHVPLGVIQRDLAKTGCVDLTITNLLEGAV) form the CUE domain. The tract at residues 350 to 369 (QSLPTASASKFPSSGPVTPQ) is disordered. Position 363 is a phosphoserine (S363). T367 bears the Phosphothreonine mark.

This sequence belongs to the AUP1 family. As to quaternary structure, identified in a complex that contains SEL1L, OS9, FAF2/UBXD8, UBE2J1/UBC6E and AUP1. Interacts with the cytoplasmic tail of ITGA2B, ITGA1, ITGA2, ITGA5, ITGAV and ITGAM. Interacts (via C-terminus) with ubiquitin-conjugating enzyme UBE2G2; the interaction recruits UBE2G2 to lipid droplets. Interacts with ubiquitin ligases AMFR/gp78 and RNF139/TRC8; this promotes interaction of UBE2G2 with AMFR and RNF139. Interacts with apolipoprotein APOB. In terms of assembly, (Microbial infection) Interacts with Dengue virus NS4A; the interaction occurs in the presence of Dengue virus NS4B and induces lipophagy which facilitates production of virus progeny. Post-translationally, monoubiquitinated and diubiquitinated. In terms of processing, (Microbial infection) Not ubiquitinated following Dengue virus infection. As to expression, detected in blood platelets and leukocytes (at protein level). Ubiquitous. Highly expressed in placenta, liver, kidney, skeletal muscle, heart and brain.

It is found in the endoplasmic reticulum membrane. It localises to the lipid droplet. The protein localises to the cytoplasmic vesicle. Its subcellular location is the autophagosome. Functionally, plays a role in the translocation of terminally misfolded proteins from the endoplasmic reticulum lumen to the cytoplasm and their degradation by the proteasome. Plays a role in lipid droplet formation. Induces lipid droplet clustering. Recruits ubiquitin-conjugating enzyme UBE2G2 to lipid droplets which facilitates its interaction with ubiquitin ligases AMFR/gp78 and RNF139/TRC8, leading to sterol-induced ubiquitination of HMGCR and its subsequent proteasomal degradation. Also required for the degradation of INSIG1, SREBF1 and SREBF2. Plays a role in regulating assembly and secretion of very low density lipoprotein particles and stability of apolipoprotein APOB. Its function is as follows. (Microbial infection) Following Dengue virus infection, required for induction of lipophagy which facilitates production of virus progeny particles. The protein is Lipid droplet-regulating VLDL assembly factor AUP1 of Homo sapiens (Human).